Consider the following 151-residue polypeptide: FIS1-related protein fis-2 (151 aa).

Residues 126 to 146 (LIGAAIVGGGALALAGLVAIF) form a helical membrane-spanning segment.

Belongs to the FIS1 family.

The protein localises to the mitochondrion outer membrane. It localises to the peroxisome membrane. Its subcellular location is the mitochondrion. Functionally, involved in the fragmentation of the mitochondrial network. Involved in perinuclear clustering of the mitochondrial network. May act, redundantly with fis-1, downstream of mitochondrial fission, before the fission products participate in mitochondrial homeostasis, mitophagy, or apoptosis. Plays a role in apoptosis by promoting mitochondrial elimination and cell-death execution, acting downstream of caspase ced-3, and perhaps independently of dynamin GTPase drp-1, caspase ced-9 and apoptosis-inducing factor AIFM/wah-1. The protein is FIS1-related protein fis-2 of Caenorhabditis elegans.